Here is a 228-residue protein sequence, read N- to C-terminus: MERVRMINVQRLLEAAEFLERRERECEHGYASSFPSMPSPRLQHSKPPRRLSRAQKHSSGSSNTSTANRSTHNELEKNRRAHLRLCLERLKVLIPLGPDCTRHTTLGLLNKAKAHIKKLEEAERKSQHQLENLEREQRFLKRRLEQLQGPQEMERIRMDSIGSTISSDRSDSEREEIEVDVESTEFSHGEADSVSTTSISDLDDHSSLQSVGSDEGYSSASVKLSFAS.

Disordered regions lie at residues 30–76 and 160–228; these read YASS…NELE and SIGS…SFAS. The span at 43–56 shows a compositional bias: basic residues; the sequence is QHSKPPRRLSRAQK. Positions 57–70 are enriched in polar residues; sequence HSSGSSNTSTANRS. Residues 67 to 119 form the bHLH domain; that stretch reads ANRSTHNELEKNRRAHLRLCLERLKVLIPLGPDCTRHTTLGLLNKAKAHIKKL. Residues 173 to 183 are compositionally biased toward acidic residues; it reads EREEIEVDVES. The segment covering 207–228 has biased composition (polar residues); the sequence is SLQSVGSDEGYSSASVKLSFAS.

In terms of assembly, efficient DNA binding requires dimerization with another bHLH protein. Binds DNA as a heterodimer with MAX. Interacts with SMC3. Interacts with RNF17.

The protein localises to the nucleus. Transcriptional repressor. MXI1 binds with MAX to form a sequence-specific DNA-binding protein complex which recognizes the core sequence 5'-CAC[GA]TG-3'. MXI1 thus antagonizes MYC transcriptional activity by competing for MAX. Isoform Short, which lacks a segment, has a much stronger suppressive potential and associates with a SIN3 homologous protein. In Mus musculus (Mouse), this protein is Max-interacting protein 1 (Mxi1).